Consider the following 171-residue polypeptide: Terminase, small subunit (171 aa).

The protein belongs to the P23virus small terminase family. Homononamer; forms a ring-like structure through which genomic DNA is translocated into the capsid. Heterodimer with the terminase large subunit; the active complex is probably heterooligomeric.

In terms of biological role, the terminase small subunit binds to the packaging initiation site and regulates the ATPase activity of the terminase large subunit. The terminase lies at a unique vertex of the procapsid and is composed of two subunits, a small terminase subunit involved in viral DNA recognition (packaging sequence), and a large terminase subunit. Both terminase subunits heterooligomerize and are docked on the portal protein to form the packaging machine. This is Terminase, small subunit from Thermus virus P23-45 (Thermus thermophilus phage P23-45).